The following is a 269-amino-acid chain: MNNITRDIYTKGQPADLKRLLMKRNSFRRPLLNMRCNSVLQYSLEKRKLTVQDLKDTRMELNNMIRILTEAMAAHEWTVDNVNIADIQSLQSTIHSTLKNFQKINVLQLNINASDNSLAYLSKPEESYNFLTIYFSTLLSYEKVENLIKKSLTVIDSLYGLLNYQINAQHSLGCIPLNQDSFKQLKLLICILEEDIKLDDCGLEISASKNEYLEKIKTHYKTWLRIHTFLTLFPVPSVLSSNLKKQMYGWFEDLRDESLKSIILASLSE.

The protein resides in the mitochondrion. Its function is as follows. Has a role in meiosis. The protein is Meiotically up-regulated gene 43 protein (mug43) of Schizosaccharomyces pombe (strain 972 / ATCC 24843) (Fission yeast).